We begin with the raw amino-acid sequence, 206 residues long: 21.9 kDa heat shock protein (206 aa).

An N-terminal signal peptide occupies residues 1–29 (MAAVAEREVLGMVAAVAAMVVMMAPPAAA). The sHSP domain occupies 65–187 (EPAAVALARC…GREPRVVAID (123 aa)). Residues 94-96 (RGD) carry the Cell attachment site motif.

This sequence belongs to the small heat shock protein (HSP20) family. May form oligomeric structures.

Its subcellular location is the endoplasmic reticulum. This chain is 21.9 kDa heat shock protein (HSP21.9), found in Oryza sativa subsp. japonica (Rice).